A 124-amino-acid polypeptide reads, in one-letter code: Large ribosomal subunit protein uL18 (124 aa).

It belongs to the universal ribosomal protein uL18 family. In terms of assembly, part of the 50S ribosomal subunit; part of the 5S rRNA/L5/L18/L25 subcomplex. Contacts the 5S and 23S rRNAs.

In terms of biological role, this is one of the proteins that bind and probably mediate the attachment of the 5S RNA into the large ribosomal subunit, where it forms part of the central protuberance. This is Large ribosomal subunit protein uL18 from Caldicellulosiruptor saccharolyticus (strain ATCC 43494 / DSM 8903 / Tp8T 6331).